Reading from the N-terminus, the 332-residue chain is Protein pbn1 (332 aa).

The Lumenal segment spans residues 1 to 301; sequence MDLQRTNQDT…SIPIADLSYK (301 aa). 4 N-linked (GlcNAc...) asparagine glycosylation sites follow: Asn-36, Asn-56, Asn-112, and Asn-206. The helical transmembrane segment at 302–324 threads the bilayer; the sequence is HVVEWVTNGVAIFSFFYLLLYLW. At 325–332 the chain is on the cytoplasmic side; that stretch reads KRFRYAKD.

It belongs to the PIGX family.

Its subcellular location is the endoplasmic reticulum membrane. The protein operates within glycolipid biosynthesis; glycosylphosphatidylinositol-anchor biosynthesis. Its function is as follows. Required for proper folding and/or the stability of a subset of proteins in the endoplasmic reticulum. Component of glycosylphosphatidylinositol-mannosyltransferase 1 which transfers the first of the 4 mannoses in the GPI-anchor precursors during GPI-anchor biosynthesis. Probably acts by stabilizing the mannosyltransferase gpi14. The chain is Protein pbn1 (pbn1) from Schizosaccharomyces pombe (strain 972 / ATCC 24843) (Fission yeast).